The sequence spans 336 residues: Biotin synthase (336 aa).

One can recognise a Radical SAM core domain in the interval 54-281 (NAIQLSTLLS…KAMVRLSAGR (228 aa)). 3 residues coordinate [4Fe-4S] cluster: C69, C73, and C76. Positions 113, 144, 204, and 276 each coordinate [2Fe-2S] cluster.

The protein belongs to the radical SAM superfamily. Biotin synthase family. Homodimer. The cofactor is [4Fe-4S] cluster. It depends on [2Fe-2S] cluster as a cofactor.

The enzyme catalyses (4R,5S)-dethiobiotin + (sulfur carrier)-SH + 2 reduced [2Fe-2S]-[ferredoxin] + 2 S-adenosyl-L-methionine = (sulfur carrier)-H + biotin + 2 5'-deoxyadenosine + 2 L-methionine + 2 oxidized [2Fe-2S]-[ferredoxin]. It participates in cofactor biosynthesis; biotin biosynthesis; biotin from 7,8-diaminononanoate: step 2/2. Its function is as follows. Catalyzes the conversion of dethiobiotin (DTB) to biotin by the insertion of a sulfur atom into dethiobiotin via a radical-based mechanism. This is Biotin synthase from Burkholderia mallei (strain ATCC 23344).